The following is a 432-amino-acid chain: D-amino acid dehydrogenase (432 aa).

3–17 (VVILGSGVVGVASAW) is an FAD binding site.

It belongs to the DadA oxidoreductase family. Requires FAD as cofactor.

It carries out the reaction a D-alpha-amino acid + A + H2O = a 2-oxocarboxylate + AH2 + NH4(+). It participates in amino-acid degradation; D-alanine degradation; NH(3) and pyruvate from D-alanine: step 1/1. Its function is as follows. Oxidative deamination of D-amino acids. This chain is D-amino acid dehydrogenase, found in Escherichia coli O127:H6 (strain E2348/69 / EPEC).